A 301-amino-acid polypeptide reads, in one-letter code: Acetyl-coenzyme A carboxylase carboxyl transferase subunit beta (301 aa).

One can recognise a CoA carboxyltransferase N-terminal domain in the interval 25-294 (LWIKCPETGE…SAANDMNGGA (270 aa)).

It belongs to the AccD/PCCB family. Acetyl-CoA carboxylase is a heterohexamer composed of biotin carboxyl carrier protein (AccB), biotin carboxylase (AccC) and two subunits each of ACCase subunit alpha (AccA) and ACCase subunit beta (AccD).

It localises to the cytoplasm. The catalysed reaction is N(6)-carboxybiotinyl-L-lysyl-[protein] + acetyl-CoA = N(6)-biotinyl-L-lysyl-[protein] + malonyl-CoA. It functions in the pathway lipid metabolism; malonyl-CoA biosynthesis; malonyl-CoA from acetyl-CoA: step 1/1. Its function is as follows. Component of the acetyl coenzyme A carboxylase (ACC) complex. Biotin carboxylase (BC) catalyzes the carboxylation of biotin on its carrier protein (BCCP) and then the CO(2) group is transferred by the transcarboxylase to acetyl-CoA to form malonyl-CoA. This Rhizobium etli (strain CIAT 652) protein is Acetyl-coenzyme A carboxylase carboxyl transferase subunit beta.